Consider the following 316-residue polypeptide: Glutathione synthetase (316 aa).

The region spanning Lys125–Glu310 is the ATP-grasp domain. Trp151–Gly207 is a binding site for ATP. Residues Glu281 and Asn283 each contribute to the Mg(2+) site.

Belongs to the prokaryotic GSH synthase family. In terms of assembly, homotetramer. It depends on Mg(2+) as a cofactor. Requires Mn(2+) as cofactor.

The enzyme catalyses gamma-L-glutamyl-L-cysteine + glycine + ATP = glutathione + ADP + phosphate + H(+). The protein operates within sulfur metabolism; glutathione biosynthesis; glutathione from L-cysteine and L-glutamate: step 2/2. Its activity is regulated as follows. Inhibited by 7,8-dihydrofolate, methotrexate and trimethoprim. This is Glutathione synthetase (gshB) from Escherichia coli (strain K12).